The chain runs to 349 residues: Nuclear distribution protein nudE homolog 1 (349 aa).

Residues 23 to 189 (AMKYKTCSEE…ELAVQQKQEK (167 aa)) adopt a coiled-coil conformation. The disordered stretch occupies residues 182 to 201 (AVQQKQEKPKSNMGSPETER).

Belongs to the nudE family. In terms of assembly, self-associates. Interacts with pafah1b1. In terms of processing, phosphorylated in mitosis.

The protein resides in the cytoplasm. Its subcellular location is the cytoskeleton. The protein localises to the microtubule organizing center. It localises to the centrosome. It is found in the spindle. The protein resides in the chromosome. Its subcellular location is the centromere. The protein localises to the kinetochore. It localises to the cleavage furrow. It is found in the cytoplasmic vesicle membrane. In terms of biological role, required for centrosome duplication and formation and function of the mitotic spindle. The protein is Nuclear distribution protein nudE homolog 1 (nde1) of Xenopus tropicalis (Western clawed frog).